The sequence spans 141 residues: Nucleoside triphosphatase NudI (141 aa).

The Nudix hydrolase domain maps to 1-141 (MRQRTIVCPL…RKTLSLKGLL (141 aa)). Residues 38 to 59 (GGVEPGERIEDALRREIREELG) carry the Nudix box motif.

Belongs to the Nudix hydrolase family. NudI subfamily. In terms of assembly, monomer. Mg(2+) is required as a cofactor.

It carries out the reaction a ribonucleoside 5'-triphosphate + H2O = a ribonucleoside 5'-phosphate + diphosphate + H(+). It catalyses the reaction a 2'-deoxyribonucleoside 5'-triphosphate + H2O = a 2'-deoxyribonucleoside 5'-phosphate + diphosphate + H(+). The catalysed reaction is dUTP + H2O = dUMP + diphosphate + H(+). The enzyme catalyses dTTP + H2O = dTMP + diphosphate + H(+). It carries out the reaction dCTP + H2O = dCMP + diphosphate + H(+). In terms of biological role, catalyzes the hydrolysis of nucleoside triphosphates, with a preference for pyrimidine deoxynucleoside triphosphates (dUTP, dTTP and dCTP). The polypeptide is Nucleoside triphosphatase NudI (Escherichia fergusonii (strain ATCC 35469 / DSM 13698 / CCUG 18766 / IAM 14443 / JCM 21226 / LMG 7866 / NBRC 102419 / NCTC 12128 / CDC 0568-73)).